The sequence spans 98 residues: uncharacterized protein (98 aa).

This is an uncharacterized protein from Homo sapiens (Human).